Here is a 252-residue protein sequence, read N- to C-terminus: Protein HEAT-INDUCED TAS1 TARGET 2 (252 aa).

Belongs to the heat induced plant HTT protein family. As to expression, expressed ubiquitously, including in seedlings, leaves, stems, inflorescences and siliques.

The protein resides in the cytoplasm. The protein localises to the nucleus. Functionally, mediates both basal and acquired thermotolerance via HSFA1s-directed pathways (e.g. HSFA1A, HSFA1B, and HSFA1D). Triggers the expression of HSFA1A and HSFA1B. This Arabidopsis thaliana (Mouse-ear cress) protein is Protein HEAT-INDUCED TAS1 TARGET 2.